The primary structure comprises 156 residues: Superoxide dismutase [Cu-Zn] 2 (156 aa).

3 residues coordinate Cu cation: His-47, His-49, and His-64. Cysteines 58 and 147 form a disulfide. The Zn(2+) site is built by His-64, His-72, His-81, and Asp-84. His-121 lines the Cu cation pocket.

It belongs to the Cu-Zn superoxide dismutase family. In terms of assembly, homodimer. Cu cation is required as a cofactor. Zn(2+) serves as cofactor.

It localises to the cytoplasm. It catalyses the reaction 2 superoxide + 2 H(+) = H2O2 + O2. Functionally, destroys radicals which are normally produced within the cells and which are toxic to biological systems. This is Superoxide dismutase [Cu-Zn] 2 (SODCC.2) from Mesembryanthemum crystallinum (Common ice plant).